We begin with the raw amino-acid sequence, 1108 residues long: Transmembrane protein 132C (1108 aa).

An N-terminal signal peptide occupies residues 1 to 27 (MRSEGAAPGPAAPLCGALSLLLGALLG). The Extracellular portion of the chain corresponds to 28–922 (KVIEGHGVTD…LVQTPRGLSD (895 aa)). Asn-316 and Asn-373 each carry an N-linked (GlcNAc...) asparagine glycan. Basic and acidic residues predominate over residues 820-836 (HASDRRQKGQHHERTGQ). The disordered stretch occupies residues 820–857 (HASDRRQKGQHHERTGQDGHLYGSSPVEREEGALRRAT). A helical transmembrane segment spans residues 923–943 (LEIGMYALLGVFCLAILVFLI). Topologically, residues 944–1108 (NCATFALKYR…NYLEKLKDKA (165 aa)) are cytoplasmic. The tract at residues 1022–1072 (QSQIHRSADSGGRQGREQKQDPLHSPTSKRKKVKFTTFTTIPPDDSCPTVN) is disordered.

This sequence belongs to the TMEM132 family.

The protein resides in the membrane. The polypeptide is Transmembrane protein 132C (TMEM132C) (Homo sapiens (Human)).